A 207-amino-acid polypeptide reads, in one-letter code: Large ribosomal subunit protein uL4 (207 aa).

The interval Thr48–Val89 is disordered.

The protein belongs to the universal ribosomal protein uL4 family. Part of the 50S ribosomal subunit.

In terms of biological role, one of the primary rRNA binding proteins, this protein initially binds near the 5'-end of the 23S rRNA. It is important during the early stages of 50S assembly. It makes multiple contacts with different domains of the 23S rRNA in the assembled 50S subunit and ribosome. Its function is as follows. Forms part of the polypeptide exit tunnel. This chain is Large ribosomal subunit protein uL4, found in Bacillus cytotoxicus (strain DSM 22905 / CIP 110041 / 391-98 / NVH 391-98).